The chain runs to 65 residues: Large ribosomal subunit protein bL32 (65 aa).

This sequence belongs to the bacterial ribosomal protein bL32 family.

This chain is Large ribosomal subunit protein bL32 (rpmF), found in Rickettsia prowazekii (strain Madrid E).